The sequence spans 353 residues: DNA-directed RNA polymerase subunit alpha (353 aa).

The segment at 1–234 is alpha N-terminal domain (alpha-NTD); it reads MVQEKVRVST…DLFIPFLHTE (234 aa). Residues 266 to 353 form an alpha C-terminal domain (alpha-CTD) region; that stretch reads KKIALKSIFI…LAQSIYSESG (88 aa).

Belongs to the RNA polymerase alpha chain family. In plastids the minimal PEP RNA polymerase catalytic core is composed of four subunits: alpha, beta, beta', and beta''. When a (nuclear-encoded) sigma factor is associated with the core the holoenzyme is formed, which can initiate transcription.

The protein localises to the plastid. The protein resides in the chloroplast. The catalysed reaction is RNA(n) + a ribonucleoside 5'-triphosphate = RNA(n+1) + diphosphate. Functionally, DNA-dependent RNA polymerase catalyzes the transcription of DNA into RNA using the four ribonucleoside triphosphates as substrates. This chain is DNA-directed RNA polymerase subunit alpha, found in Panax ginseng (Korean ginseng).